The chain runs to 945 residues: Alanine--tRNA ligase (945 aa).

Histidine 564, histidine 568, cysteine 666, and histidine 670 together coordinate Zn(2+). The disordered stretch occupies residues 911–945 (SGGGRPDMAQAGGKDASKLPEALQQARETMTEKLG).

The protein belongs to the class-II aminoacyl-tRNA synthetase family. Requires Zn(2+) as cofactor.

It localises to the cytoplasm. It catalyses the reaction tRNA(Ala) + L-alanine + ATP = L-alanyl-tRNA(Ala) + AMP + diphosphate. Catalyzes the attachment of alanine to tRNA(Ala) in a two-step reaction: alanine is first activated by ATP to form Ala-AMP and then transferred to the acceptor end of tRNA(Ala). Also edits incorrectly charged Ser-tRNA(Ala) and Gly-tRNA(Ala) via its editing domain. The sequence is that of Alanine--tRNA ligase from Rhodopirellula baltica (strain DSM 10527 / NCIMB 13988 / SH1).